The chain runs to 42 residues: Alpha-conotoxin VnIB (42 aa).

The propeptide occupies 1–22 (ASDGRNAAADDKASDPIALTVR). Cystine bridges form between C25-C31 and C26-C38. The residue at position 39 (G39) is a Glycine amide.

Belongs to the conotoxin A superfamily. Expressed by the venom duct.

Its subcellular location is the secreted. Alpha-conotoxins act on postsynaptic membranes, they bind to the nicotinic acetylcholine receptors (nAChR) and thus inhibit them. This toxin potently and selectively inhibits human and rat alpha-6-beta-4/CHRNA6-CHRNB4 nAChR (IC(50)=12 nM on rat nAChR). It exhibits rapid binding and unbinding at this receptor. It also shows activity on rat alpha-6-beta-4/CHRNA6-CHRNB4 (IC(50)=12 nM), human alpha-6/alpha-3-beta-4 (CHRNA6/CHRNA3-CHRNB4) (IC(50)=5.3 nM), rat alpha-6/alpha-3-beta-4 (CHRNA6/CHRNA3-CHRNB4) (IC(50)=18 nM), rat alpha-3-beta-4/CHRNA3-CHRNB4 (IC(50)=320 nM), and rat alpha-6/alpha-3-beta-2-beta-3 (CHRNA6/CHRNA3-CHRNB2-CHRNB3) (IC(50)=4 uM). This is Alpha-conotoxin VnIB from Conus ventricosus (Mediterranean cone).